The chain runs to 322 residues: Formimidoylglutamase (322 aa).

His130, Asp156, His158, Asp160, Cys245, and Asp247 together coordinate Mn(2+).

It belongs to the arginase family. Mn(2+) is required as a cofactor.

The enzyme catalyses N-formimidoyl-L-glutamate + H2O = formamide + L-glutamate. The protein operates within amino-acid degradation; L-histidine degradation into L-glutamate; L-glutamate from N-formimidoyl-L-glutamate (hydrolase route): step 1/1. In terms of biological role, catalyzes the conversion of N-formimidoyl-L-glutamate to L-glutamate and formamide. This chain is Formimidoylglutamase, found in Lysinibacillus sphaericus (strain C3-41).